Here is a 409-residue protein sequence, read N- to C-terminus: Ubiquitin-associated domain-containing protein 1 (409 aa).

Position 1 is an N-acetylmethionine (methionine 1). A Ubiquitin-like domain is found at 14–98 (LRLHICAADG…LLLIKKRAPS (85 aa)). Positions 187–231 (DEDERVDETALRQLTEMGFPESRASKALRLNHMSVPQAMEWLIEH) constitute a UBA 1 domain. Residues 235–273 (PAIDTPLPGHAAQAEASAAAATSSSSSEAAVGTSVEDEE) are disordered. The segment covering 245 to 264 (AAQAEASAAAATSSSSSEAA) has biased composition (low complexity). Residues 292 to 332 (RADARAVISLMEMGFDEKEVIDALRVNNNQQNAACEWLLGD) enclose the UBA 2 domain. One can recognise an STI1 domain in the interval 357–396 (NPVVQLGLTNPKTLLAFEDMLENPLNSTQWMNDPETGPVM).

Component of the KPC complex composed of RNF123/KPC1 and UBAC1/KPC2. Interacts (via ubiquitin-like domain) with RNF123. Interacts (via ubiquitin-like and UBA domains) with the proteasome via its N-terminal domain.

The protein localises to the cytoplasm. The protein operates within protein modification; protein ubiquitination. Non-catalytic component of the KPC complex, a E3 ubiquitin-protein ligase complex that mediates polyubiquitination of target proteins, such as CDKN1B and NFKB1. The KPC complex catalyzes polyubiquitination and proteasome-mediated degradation of CDKN1B during G1 phase of the cell cycle. The KPC complex also acts as a key regulator of the NF-kappa-B signaling by promoting maturation of the NFKB1 component of NF-kappa-B by catalyzing ubiquitination of the NFKB1 p105 precursor. Within the KPC complex, UBAC1 acts as an adapter that promotes the transfer of target proteins that have been polyubiquitinated by RNF123/KPC1 to the 26S proteasome. This Rattus norvegicus (Rat) protein is Ubiquitin-associated domain-containing protein 1 (Ubac1).